The primary structure comprises 1209 residues: Major DNA-binding protein (1209 aa).

A disordered region spans residues Asn-290–Ser-312. A zinc finger spans residues Cys-503 to His-516. The short motif at Phe-849–Trp-850 is the Required for filament formation element. Positions Gln-1182–Leu-1209 are required for nuclear localization.

Belongs to the herpesviridae major DNA-binding protein family. As to quaternary structure, homooligomers. Forms double-helical filaments necessary for the formation of replication compartments within the host nucleus. Interacts with the origin-binding protein. Interacts with the helicase primase complex; this interaction stimulates primer synthesis activity of the helicase-primase complex. Interacts with the DNA polymerase. Interacts with the alkaline exonuclease; this interaction increases its nuclease processivity.

The protein resides in the host nucleus. Functionally, plays several crucial roles in viral infection. Participates in the opening of the viral DNA origin to initiate replication by interacting with the origin-binding protein. May disrupt loops, hairpins and other secondary structures present on ssDNA to reduce and eliminate pausing of viral DNA polymerase at specific sites during elongation. Promotes viral DNA recombination by performing strand-transfer, characterized by the ability to transfer a DNA strand from a linear duplex to a complementary single-stranded DNA circle. Can also catalyze the renaturation of complementary single strands. Additionally, reorganizes the host cell nucleus, leading to the formation of prereplicative sites and replication compartments. This process is driven by the protein which can form double-helical filaments in the absence of DNA. The sequence is that of Major DNA-binding protein from Equine herpesvirus 1 (strain V592) (EHV-1).